A 233-amino-acid polypeptide reads, in one-letter code: Putative glutathione peroxidase 7, chloroplastic (233 aa).

A chloroplast-targeting transit peptide spans 1–69; sequence MAFSYASFST…KSKNFSVYAR (69 aa). Residue Cys108 is part of the active site.

The protein belongs to the glutathione peroxidase family.

It is found in the plastid. It localises to the chloroplast. It carries out the reaction 2 glutathione + H2O2 = glutathione disulfide + 2 H2O. Functionally, may constitute a glutathione peroxidase-like protective system against oxidative stresses. The sequence is that of Putative glutathione peroxidase 7, chloroplastic (GPX7) from Arabidopsis thaliana (Mouse-ear cress).